Consider the following 461-residue polypeptide: B3 domain-containing protein REM9 (461 aa).

Positions 11 to 103 (NQHFFQPLLP…VFHVTALGPS (93 aa)) form a DNA-binding region, TF-B3 1. The segment at 110-146 (PQSSRHEEGEESGENEISEKEGEENVQKESDKSSSDL) is disordered. Over residues 126–143 (ISEKEGEENVQKESDKSS) the composition is skewed to basic and acidic residues. DNA-binding regions (TF-B3) lie at residues 148 to 244 (CFSQ…CSRT) and 230 to 332 (LQKA…EQPS). The interval 333–415 (FKAEDGRHKR…SGIEGNLQHT (83 aa)) is disordered. Basic and acidic residues predominate over residues 384-394 (PKVEIREKIAE). The span at 400 to 415 (RASNKSSGIEGNLQHT) shows a compositional bias: polar residues.

It localises to the nucleus. The sequence is that of B3 domain-containing protein REM9 (REM9) from Arabidopsis thaliana (Mouse-ear cress).